The chain runs to 370 residues: Queuine tRNA-ribosyltransferase (370 aa).

D89 serves as the catalytic Proton acceptor. Substrate-binding positions include 89-93 (DSGGF), D143, and G214. The interval 245–251 (GVGKPED) is RNA binding. D264 (nucleophile) is an active-site residue. Residues 269–273 (TRNAR) are RNA binding; important for wobble base 34 recognition. Zn(2+) is bound by residues C302, C304, C307, and H333.

Belongs to the queuine tRNA-ribosyltransferase family. In terms of assembly, homodimer. Within each dimer, one monomer is responsible for RNA recognition and catalysis, while the other monomer binds to the replacement base PreQ1. It depends on Zn(2+) as a cofactor.

The enzyme catalyses 7-aminomethyl-7-carbaguanine + guanosine(34) in tRNA = 7-aminomethyl-7-carbaguanosine(34) in tRNA + guanine. It participates in tRNA modification; tRNA-queuosine biosynthesis. Its function is as follows. Catalyzes the base-exchange of a guanine (G) residue with the queuine precursor 7-aminomethyl-7-deazaguanine (PreQ1) at position 34 (anticodon wobble position) in tRNAs with GU(N) anticodons (tRNA-Asp, -Asn, -His and -Tyr). Catalysis occurs through a double-displacement mechanism. The nucleophile active site attacks the C1' of nucleotide 34 to detach the guanine base from the RNA, forming a covalent enzyme-RNA intermediate. The proton acceptor active site deprotonates the incoming PreQ1, allowing a nucleophilic attack on the C1' of the ribose to form the product. After dissociation, two additional enzymatic reactions on the tRNA convert PreQ1 to queuine (Q), resulting in the hypermodified nucleoside queuosine (7-(((4,5-cis-dihydroxy-2-cyclopenten-1-yl)amino)methyl)-7-deazaguanosine). This is Queuine tRNA-ribosyltransferase from Buchnera aphidicola subsp. Acyrthosiphon pisum (strain APS) (Acyrthosiphon pisum symbiotic bacterium).